The primary structure comprises 312 residues: Molybdenum cofactor biosynthesis bifunctional protein (312 aa).

A molybdenum cofactor biosynthesis protein C region spans residues 1–155 (MEFTHLDENG…GGKSSAAEYH (155 aa)). Residues 74–76 (LCH) and 110–111 (ME) contribute to the substrate site. Aspartate 125 is an active-site residue. Residues 156-312 (PRTAILVMSD…FPMLKGDGHA (157 aa)) form a molybdenum cofactor biosynthesis protein B region.

The protein in the N-terminal section; belongs to the MoaC family. This sequence in the C-terminal section; belongs to the MoaB/Mog family.

It catalyses the reaction (8S)-3',8-cyclo-7,8-dihydroguanosine 5'-triphosphate = cyclic pyranopterin phosphate + diphosphate. It functions in the pathway cofactor biosynthesis; molybdopterin biosynthesis. Catalyzes the conversion of (8S)-3',8-cyclo-7,8-dihydroguanosine 5'-triphosphate to cyclic pyranopterin monophosphate (cPMP). This is Molybdenum cofactor biosynthesis bifunctional protein (moaCB) from Chlorobaculum tepidum (strain ATCC 49652 / DSM 12025 / NBRC 103806 / TLS) (Chlorobium tepidum).